The chain runs to 264 residues: [LysW]-aminoadipate/[LysW]-glutamate kinase (264 aa).

Residues 35–36 (GG), R62, and N167 contribute to the substrate site.

It belongs to the acetylglutamate kinase family. LysZ subfamily.

The protein resides in the cytoplasm. The catalysed reaction is [amino-group carrier protein]-C-terminal-N-(1,4-dicarboxybutan-1-yl)-L-glutamine + ATP = [amino-group carrier protein]-C-terminal-N-(1-carboxy-5-phosphooxy-5-oxopentan-1-yl)-L-glutamine + ADP. The enzyme catalyses [amino-group carrier protein]-C-terminal-gamma-(L-glutamyl)-L-glutamate + ATP = [amino-group carrier protein]-C-terminal-gamma-(5-phospho-L-glutamyl)-L-glutamate + ADP. It functions in the pathway amino-acid biosynthesis; L-lysine biosynthesis via AAA pathway; L-lysine from L-alpha-aminoadipate (Thermus route): step 2/5. Its pathway is amino-acid biosynthesis; L-arginine biosynthesis. In terms of biological role, involved in both the arginine and lysine biosynthetic pathways. Phosphorylates the LysW-bound precursors glutamate (for arginine biosynthesis), respectively alpha-aminoadipate (for lysine biosynthesis). The polypeptide is [LysW]-aminoadipate/[LysW]-glutamate kinase (Saccharolobus islandicus (strain L.S.2.15 / Lassen #1) (Sulfolobus islandicus)).